The primary structure comprises 367 residues: Alanine racemase (367 aa).

The Proton acceptor; specific for D-alanine role is filled by lysine 40. N6-(pyridoxal phosphate)lysine is present on lysine 40. Arginine 136 is a binding site for substrate. The Proton acceptor; specific for L-alanine role is filled by tyrosine 263. Methionine 310 lines the substrate pocket.

It belongs to the alanine racemase family. The cofactor is pyridoxal 5'-phosphate.

It catalyses the reaction L-alanine = D-alanine. It functions in the pathway amino-acid biosynthesis; D-alanine biosynthesis; D-alanine from L-alanine: step 1/1. Catalyzes the interconversion of L-alanine and D-alanine. May also act on other amino acids. The polypeptide is Alanine racemase (alr) (Streptococcus pneumoniae (strain Taiwan19F-14)).